A 307-amino-acid chain; its full sequence is Glutaminase (307 aa).

7 residues coordinate substrate: Ser-66, Asn-116, Glu-160, Asn-167, Tyr-191, Tyr-243, and Val-261.

It belongs to the glutaminase family. Homotetramer.

It catalyses the reaction L-glutamine + H2O = L-glutamate + NH4(+). This Pseudoalteromonas translucida (strain TAC 125) protein is Glutaminase.